The sequence spans 506 residues: L-amino-acid oxidase (506 aa).

Positions 1 to 18 (MNVFFTFSLLFLAALGSC) are cleaved as a signal peptide. The cysteines at positions 28 and 191 are disulfide-linked. E36 lines the Zn(2+) pocket. Residues 61 to 62 (MS), S62, 81 to 82 (EA), R89, and 105 to 108 (GPMR) contribute to the FAD site. A substrate-binding site is contributed by R108. Zn(2+) is bound by residues E111, E118, and E150. A glycan (N-linked (GlcNAc...) asparagine) is linked at N190. A Zn(2+)-binding site is contributed by D219. Residue H241 participates in substrate binding. Residue E248 coordinates Zn(2+). Residue V279 coordinates FAD. Zn(2+) contacts are provided by E299 and H332. An intrachain disulfide couples C349 to C430. Y390 is a binding site for substrate. H458 serves as a coordination point for Zn(2+). Residues E475 and 482–487 (GWIDST) contribute to the FAD site. 482–483 (GW) is a substrate binding site.

This sequence belongs to the flavin monoamine oxidase family. FIG1 subfamily. As to quaternary structure, homodimer; non-covalently linked. Stabilized by a single zinc-binding site located at the dimer interface (Asp-219, His-332 and His-458). Other zinc-bind sites can be understood as transient and non-specific, and appear due to the high concentration of zinc ions used in the crystallization experiments. The cofactor is FAD. In terms of tissue distribution, expressed by the venom gland.

Its subcellular location is the secreted. The catalysed reaction is an L-alpha-amino acid + O2 + H2O = a 2-oxocarboxylate + H2O2 + NH4(+). It carries out the reaction L-leucine + O2 + H2O = 4-methyl-2-oxopentanoate + H2O2 + NH4(+). It catalyses the reaction L-phenylalanine + O2 + H2O = 3-phenylpyruvate + H2O2 + NH4(+). The enzyme catalyses L-tryptophan + O2 + H2O = indole-3-pyruvate + H2O2 + NH4(+). The catalysed reaction is L-methionine + O2 + H2O = 4-methylsulfanyl-2-oxobutanoate + H2O2 + NH4(+). It carries out the reaction L-isoleucine + O2 + H2O = (S)-3-methyl-2-oxopentanoate + H2O2 + NH4(+). It catalyses the reaction L-tyrosine + O2 + H2O = 3-(4-hydroxyphenyl)pyruvate + H2O2 + NH4(+). Catalyzes an oxidative deamination of predominantly hydrophobic and aromatic L-amino acids, thus producing hydrogen peroxide that may contribute to the diverse toxic effects of this enzyme. Shows high catalytic activity against L-Met, L-Leu, L-Phe, L-Trp, L-Tyr, L-Ile. Shows no or weak activity on L-Cys, L-Val, L-Gln, L-Thr, L-Ser, L-Lys, L-Arg, L-Asn, L-Glu, L-Gly, L-Pro, L-Asp and L-His. Induces platelet aggregation in platelet-rich plasma, probably due to hydrogen peroxide production, since catalase inhibits aggregation effect. Induces moderate mouse paw edema. Induces apoptosis and shows cytotoxicity against several cancer cell lines, which is inhibited by catalase. Shows hemolytic activity and antibacterial activities against both Gram-positive and Gram-negative bacteria. Has parasiticidal activities against both trypanosomes and leishmania, as a result of enzyme-catalyzed hydrogen peroxide production. Unlike other snake venom L-amino acid oxidases, does not induce hemorrhage (with 50 ug of enzyme). The chain is L-amino-acid oxidase from Bothrops atrox (Barba amarilla).